We begin with the raw amino-acid sequence, 330 residues long: Methionyl-tRNA formyltransferase (330 aa).

121-124 (SLLP) lines the (6S)-5,6,7,8-tetrahydrofolate pocket.

The protein belongs to the Fmt family.

It carries out the reaction L-methionyl-tRNA(fMet) + (6R)-10-formyltetrahydrofolate = N-formyl-L-methionyl-tRNA(fMet) + (6S)-5,6,7,8-tetrahydrofolate + H(+). Attaches a formyl group to the free amino group of methionyl-tRNA(fMet). The formyl group appears to play a dual role in the initiator identity of N-formylmethionyl-tRNA by promoting its recognition by IF2 and preventing the misappropriation of this tRNA by the elongation apparatus. This chain is Methionyl-tRNA formyltransferase, found in Burkholderia cenocepacia (strain HI2424).